A 354-amino-acid polypeptide reads, in one-letter code: Ferredoxin--NADP reductase 2 (354 aa).

FAD contacts are provided by Thr14, Asp33, Gln41, Tyr46, Ala86, Phe121, Asp289, and Thr330.

Belongs to the ferredoxin--NADP reductase type 2 family. Homodimer. The cofactor is FAD.

It carries out the reaction 2 reduced [2Fe-2S]-[ferredoxin] + NADP(+) + H(+) = 2 oxidized [2Fe-2S]-[ferredoxin] + NADPH. This chain is Ferredoxin--NADP reductase 2, found in Christiangramia forsetii (strain DSM 17595 / CGMCC 1.15422 / KT0803) (Gramella forsetii).